Here is a 682-residue protein sequence, read N- to C-terminus: Potassium-transporting ATPase ATP-binding subunit (682 aa).

4 helical membrane passes run 34–54 (PVMF…LAMV), 62–82 (ALFT…ANFA), 219–239 (IALT…TATL), and 254–274 (VLVA…LSAI). The active-site 4-aspartylphosphate intermediate is Asp-307. ATP-binding positions include Asp-344, Glu-348, 377 to 384 (FTAQSRMS), and Lys-395. Residues Asp-518 and Asp-522 each coordinate Mg(2+). The next 3 helical transmembrane spans lie at 588–608 (FAII…LNVM), 616–636 (AILS…PLAL), and 662–682 (LVVP…LGLA).

The protein belongs to the cation transport ATPase (P-type) (TC 3.A.3) family. Type IA subfamily. As to quaternary structure, the system is composed of three essential subunits: KdpA, KdpB and KdpC.

Its subcellular location is the cell inner membrane. It catalyses the reaction K(+)(out) + ATP + H2O = K(+)(in) + ADP + phosphate + H(+). In terms of biological role, part of the high-affinity ATP-driven potassium transport (or Kdp) system, which catalyzes the hydrolysis of ATP coupled with the electrogenic transport of potassium into the cytoplasm. This subunit is responsible for energy coupling to the transport system and for the release of the potassium ions to the cytoplasm. The sequence is that of Potassium-transporting ATPase ATP-binding subunit from Salmonella schwarzengrund (strain CVM19633).